Here is a 459-residue protein sequence, read N- to C-terminus: Putrescine aminotransferase (459 aa).

Pyridoxal 5'-phosphate contacts are provided by residues 150–151 and glutamine 274; that span reads GT. Lysine 300 bears the N6-(pyridoxal phosphate)lysine mark. Threonine 332 lines the pyridoxal 5'-phosphate pocket.

The protein belongs to the class-III pyridoxal-phosphate-dependent aminotransferase family. Putrescine aminotransferase subfamily. The cofactor is pyridoxal 5'-phosphate.

The catalysed reaction is an alkane-alpha,omega-diamine + 2-oxoglutarate = an omega-aminoaldehyde + L-glutamate. It catalyses the reaction putrescine + 2-oxoglutarate = 1-pyrroline + L-glutamate + H2O. The enzyme catalyses cadaverine + 2-oxoglutarate = 5-aminopentanal + L-glutamate. It functions in the pathway amine and polyamine degradation; putrescine degradation; 4-aminobutanal from putrescine (transaminase route): step 1/1. Catalyzes the aminotransferase reaction from putrescine to 2-oxoglutarate, leading to glutamate and 4-aminobutanal, which spontaneously cyclizes to form 1-pyrroline. This is the first step in one of two pathways for putrescine degradation, where putrescine is converted into 4-aminobutanoate (gamma-aminobutyrate or GABA) via 4-aminobutanal. Also functions as a cadaverine transaminase in a a L-lysine degradation pathway to succinate that proceeds via cadaverine, glutarate and L-2-hydroxyglutarate. The sequence is that of Putrescine aminotransferase from Shigella flexneri serotype 5b (strain 8401).